Reading from the N-terminus, the 314-residue chain is Putative SET domain-containing protein L222 (314 aa).

The SET domain occupies 23 to 172 (EYIQVIYQNP…ANTEITISYG (150 aa)).

The protein belongs to the class V-like SAM-binding methyltransferase superfamily.

The chain is Putative SET domain-containing protein L222 from Acanthamoeba polyphaga mimivirus (APMV).